The sequence spans 317 residues: Ribosomal RNA small subunit methyltransferase H (317 aa).

S-adenosyl-L-methionine is bound by residues 37-39 (AGH), D56, F85, D106, and Q113.

The protein belongs to the methyltransferase superfamily. RsmH family.

Its subcellular location is the cytoplasm. It carries out the reaction cytidine(1402) in 16S rRNA + S-adenosyl-L-methionine = N(4)-methylcytidine(1402) in 16S rRNA + S-adenosyl-L-homocysteine + H(+). Specifically methylates the N4 position of cytidine in position 1402 (C1402) of 16S rRNA. The chain is Ribosomal RNA small subunit methyltransferase H from Lactococcus lactis subsp. lactis (strain IL1403) (Streptococcus lactis).